Consider the following 416-residue polypeptide: Homeobox protein ceh-62 (416 aa).

A compositionally biased stretch (low complexity) spans 103-113 (TPTPIIATPSI). Disordered stretches follow at residues 103 to 144 (TPTP…QATR) and 178 to 247 (FQNR…FPPT). Residues 118–127 (QPLQSPSAPN) are compositionally biased toward polar residues. Positions 130-189 (SRRKRTTFSPEQATRLEAEYIGDSYMAREKRHLLAQSLKLSENQVKTWFQNRRAKDKRDR) form a DNA-binding region, homeobox. Positions 193 to 218 (NASNHTSNSRRSSPSRKSSSDSTPTP) are enriched in low complexity. Polar residues predominate over residues 219 to 240 (TQATQFDMPTQIQTASPPTTAD).

It localises to the nucleus. This is Homeobox protein ceh-62 from Caenorhabditis elegans.